We begin with the raw amino-acid sequence, 115 residues long: NADH-ubiquinone oxidoreductase chain 3 (115 aa).

Transmembrane regions (helical) follow at residues 4–24 (LMVM…AFWL), 55–75 (FFLV…LLPL), and 87–107 (MMLT…YEWM).

This sequence belongs to the complex I subunit 3 family. In terms of assembly, core subunit of respiratory chain NADH dehydrogenase (Complex I) which is composed of 45 different subunits. Interacts with TMEM186. Interacts with TMEM242.

The protein resides in the mitochondrion inner membrane. The catalysed reaction is a ubiquinone + NADH + 5 H(+)(in) = a ubiquinol + NAD(+) + 4 H(+)(out). In terms of biological role, core subunit of the mitochondrial membrane respiratory chain NADH dehydrogenase (Complex I) which catalyzes electron transfer from NADH through the respiratory chain, using ubiquinone as an electron acceptor. Essential for the catalytic activity of complex I. In Peromyscus mexicanus (Mexican deer mouse), this protein is NADH-ubiquinone oxidoreductase chain 3.